Reading from the N-terminus, the 303-residue chain is tRNA pseudouridine synthase B (303 aa).

Asp-47 serves as the catalytic Nucleophile.

This sequence belongs to the pseudouridine synthase TruB family. Type 1 subfamily.

It catalyses the reaction uridine(55) in tRNA = pseudouridine(55) in tRNA. Responsible for synthesis of pseudouridine from uracil-55 in the psi GC loop of transfer RNAs. The chain is tRNA pseudouridine synthase B from Legionella pneumophila (strain Paris).